A 404-amino-acid polypeptide reads, in one-letter code: Multidrug resistance protein MdtG (404 aa).

Transmembrane regions (helical) follow at residues 19-39 (LGCFLTGAAFSLVMPFLPLYV), 56-76 (LVFSITFLFSAIASPFWGGLA), 90-110 (LGMAIVMLLMGMAQNIWQFLI), 113-133 (ALLGLLGGFILNANALIATQV), 144-164 (TLSTGGVSGALLGPLAGGLLA), 171-191 (PVFFITASVLFICFLLTFFFI), 222-242 (LFVTTLIIQVATGSIAPILTL), 254-274 (IAFISGMIASVPGVAALLSAP), 288-308 (ILIVALIISVLLLIPMSFVQT), 317-337 (FLLGAADGALLPAVQTLLVYN), and 376-396 (AVFCVTAGVVLFNAIYSWNSL).

It belongs to the major facilitator superfamily. DHA1 family. MdtG (TC 2.A.1.2.20) subfamily.

It is found in the cell inner membrane. This Salmonella choleraesuis (strain SC-B67) protein is Multidrug resistance protein MdtG.